The sequence spans 284 residues: tRNA pseudouridine synthase A (284 aa).

Asp62 (nucleophile) is an active-site residue. Position 120 (Tyr120) interacts with substrate.

It belongs to the tRNA pseudouridine synthase TruA family. Homodimer.

It catalyses the reaction uridine(38/39/40) in tRNA = pseudouridine(38/39/40) in tRNA. In terms of biological role, formation of pseudouridine at positions 38, 39 and 40 in the anticodon stem and loop of transfer RNAs. This is tRNA pseudouridine synthase A from Thermosynechococcus vestitus (strain NIES-2133 / IAM M-273 / BP-1).